Here is a 331-residue protein sequence, read N- to C-terminus: GTP 3',8-cyclase (331 aa).

The Radical SAM core domain occupies 6-234 (PFNRKIDYLR…PATGKSHDGP (229 aa)). Arginine 15 is a binding site for GTP. Cysteine 22 and cysteine 26 together coordinate [4Fe-4S] cluster. Tyrosine 28 contacts S-adenosyl-L-methionine. Position 29 (cysteine 29) interacts with [4Fe-4S] cluster. Arginine 66 is a GTP binding site. Glycine 70 provides a ligand contact to S-adenosyl-L-methionine. Position 97 (serine 97) interacts with GTP. Serine 121 is a binding site for S-adenosyl-L-methionine. Position 158 (lysine 158) interacts with GTP. Residue methionine 192 coordinates S-adenosyl-L-methionine. [4Fe-4S] cluster is bound by residues cysteine 258 and cysteine 261. Residue 263 to 265 (RVR) participates in GTP binding. Cysteine 275 is a binding site for [4Fe-4S] cluster.

It belongs to the radical SAM superfamily. MoaA family. As to quaternary structure, monomer and homodimer. [4Fe-4S] cluster serves as cofactor.

It catalyses the reaction GTP + AH2 + S-adenosyl-L-methionine = (8S)-3',8-cyclo-7,8-dihydroguanosine 5'-triphosphate + 5'-deoxyadenosine + L-methionine + A + H(+). Its pathway is cofactor biosynthesis; molybdopterin biosynthesis. Its function is as follows. Catalyzes the cyclization of GTP to (8S)-3',8-cyclo-7,8-dihydroguanosine 5'-triphosphate. The protein is GTP 3',8-cyclase of Hydrogenovibrio crunogenus (strain DSM 25203 / XCL-2) (Thiomicrospira crunogena).